A 611-amino-acid chain; its full sequence is mRNA export factor GLE1 (611 aa).

Disordered regions lie at residues Ser-69 to Cys-94 and Lys-220 to Arg-243. The span at Asp-71–Asp-89 shows a compositional bias: acidic residues.

The protein belongs to the GLE1 family. In terms of assembly, part of the nuclear pore complex (NPC). The NPC has an eight-fold symmetrical structure comprising a central transport channel and two rings, the cytoplasmic and nuclear rings, to which eight filaments are attached. The cytoplasmic filaments have loose ends, while the nuclear filaments are joined in a distal ring, forming a nuclear basket. NPCs are highly dynamic in configuration and composition, and can be devided in 3 subcomplexes, the NUP62 subcomplex, the NUP107-160 subcomplex and the NUP93 subcomplex, containing approximately 30 different nucleoporin proteins.

Its subcellular location is the nucleus envelope. The protein localises to the nucleus. It is found in the nuclear pore complex. Its function is as follows. Required for seed viability. This is mRNA export factor GLE1 from Arabidopsis thaliana (Mouse-ear cress).